Consider the following 291-residue polypeptide: Porphobilinogen deaminase (291 aa).

S-(dipyrrolylmethanemethyl)cysteine is present on Cys233.

This sequence belongs to the HMBS family. In terms of assembly, monomer. The cofactor is dipyrromethane.

The enzyme catalyses 4 porphobilinogen + H2O = hydroxymethylbilane + 4 NH4(+). It participates in porphyrin-containing compound metabolism; protoporphyrin-IX biosynthesis; coproporphyrinogen-III from 5-aminolevulinate: step 2/4. In terms of biological role, tetrapolymerization of the monopyrrole PBG into the hydroxymethylbilane pre-uroporphyrinogen in several discrete steps. The protein is Porphobilinogen deaminase (hemC) of Ruminiclostridium josui (Clostridium josui).